The following is a 397-amino-acid chain: MSPSFLVLLTILGPGNSLQLQDPWGHETKEAPGPVHLRERRQVVGDDDFEDPDYTYNTDPPELLKNVTNTVAAHPELPTTVVMLERDSTSAGTSERATEKIATTDPTAPGTGGTAVGMLSTDSATQWSLTSVETVQPASTEVETSQPAPMEAETSQPAPMEAETSQPAPMEAETSQPAPMEADTSQPAPMEAETSQPAPNEAETSKPAPTEAETSKPAPTEAETTQLPRIQAVKTLFTTSAATEVPSTEPTTMETASTESNESTIFLGPSVTHLPDSGLKKGLIVTPGNSPAPTLPGSSDLIPVKQCLLIILILASLATIFLVCTVVLAVRLSRKTHMYPVRNYSPTEMICISSLLPEGGDGAPVTANGGLPKVQDLKTEPSGDRDGDDLTLHSFLP.

An N-terminal signal peptide occupies residues 1-17 (MSPSFLVLLTILGPGNS). Residues 18-41 (LQLQDPWGHETKEAPGPVHLRERR) constitute a propeptide that is removed on maturation. Residues 18 to 307 (LQLQDPWGHE…SSDLIPVKQC (290 aa)) lie on the Extracellular side of the membrane. The residue at position 54 (Tyr54) is a Sulfotyrosine. An O-linked (GalNAc...) threonine glycan is attached at Thr58. Residue Asn66 is glycosylated (N-linked (GlcNAc...) asparagine). A disordered region spans residues 89-261 (TSAGTSERAT…TMETASTESN (173 aa)). Polar residues predominate over residues 120–198 (STDSATQWSL…PMEAETSQPA (79 aa)). 10 consecutive repeat copies span residues 126–135 (QWSLTSVETV), 136–145 (QPASTEVETS), 146–155 (QPAPMEAETS), 156–165 (QPAPMEAETS), 166–175 (QPAPMEAETS), 176–185 (QPAPMEADTS), 186–195 (QPAPMEAETS), 196–205 (QPAPNEAETS), 206–215 (KPAPTEAETS), and 216–225 (KPAPTEAETT). The tract at residues 126–225 (QWSLTSVETV…KPAPTEAETT (100 aa)) is 10 X 10 AA tandem repeats. Residues 236–261 (LFTTSAATEVPSTEPTTMETASTESN) are compositionally biased toward polar residues. Asn261 is a glycosylation site (N-linked (GlcNAc...) asparagine). A helical transmembrane segment spans residues 308–328 (LLIILILASLATIFLVCTVVL). Topologically, residues 329 to 397 (AVRLSRKTHM…DDLTLHSFLP (69 aa)) are cytoplasmic. Residues 364 to 390 (PVTANGGLPKVQDLKTEPSGDRDGDDL) are disordered. The segment covering 375 to 390 (QDLKTEPSGDRDGDDL) has biased composition (basic and acidic residues). At Thr391 the chain carries Phosphothreonine. A Phosphoserine modification is found at Ser394.

Homodimer; disulfide-linked. Interacts with P- and E-selectins, through their lectin/EGF domains. Interaction with P-selectin requires sialyl Lewis X glycan modification and tyrosine sulfation, probably on Tyr-54, for high affinity binding. Dimerization appears not to be required for P-selectin/SELP binding. Interacts with SNX20. Interacts with MSN and SYK; mediates SYK activation downstream of SELPLG. Interacts with HAVCR1. Post-translationally, displays complex, core-2, sialylated and fucosylated O-linked oligosaccharides, at least some of which appear to contain poly-N-acetyllactosamine with varying degrees of substitution. Mainly disialylated or neutral forms of the core-2 tetrasaccharide, Galbeta1--&gt;4GlcNAcbeta1--&gt;6(Galbeta1--&gt;3)GalNAcOH. The GlcN:GalN ratio is approximately 2:1 and the Man:Fuc ratio 3:5. Contains about 14% fucose with alpha-1,3 linkage present in two forms: One species is a disialylated, monofucosylated glycan, and the other, a monosialylated, trifucosylated glycan with a polylactosamine backbone. The fucosylated forms carry the Lewis antigen and are important for interaction with selectins and for functioning. No sulfated O-glycans. Some N-glycosylation. In terms of tissue distribution, highly expressed in blood, bone marrow, brain, adipose tissue, spleen, and thymus. Also expressed in heart, kidney, liver, muscle, ovary, and stomach.

It localises to the cell membrane. In terms of biological role, a SLe(x)-type proteoglycan, which through high affinity, calcium-dependent interactions with E- and P-selectins, mediates rapid rolling of leukocytes over vascular surfaces during the initial steps in inflammation. Critical for the initial leukocyte capture. This Mus musculus (Mouse) protein is P-selectin glycoprotein ligand 1 (Selplg).